An 85-amino-acid chain; its full sequence is Small ribosomal subunit protein bS16 (85 aa).

Belongs to the bacterial ribosomal protein bS16 family.

In Neorickettsia sennetsu (strain ATCC VR-367 / Miyayama) (Ehrlichia sennetsu), this protein is Small ribosomal subunit protein bS16.